Here is an 83-residue protein sequence, read N- to C-terminus: Large ribosomal subunit protein bL31B (83 aa).

Belongs to the bacterial ribosomal protein bL31 family. Type B subfamily. In terms of assembly, part of the 50S ribosomal subunit.

In Bacteroides fragilis (strain ATCC 25285 / DSM 2151 / CCUG 4856 / JCM 11019 / LMG 10263 / NCTC 9343 / Onslow / VPI 2553 / EN-2), this protein is Large ribosomal subunit protein bL31B.